The sequence spans 449 residues: PGL/p-HBAD biosynthesis rhamnosyltransferase (449 aa).

The protein belongs to the glycosyltransferase 28 family.

Functionally, catalyzes the transfer of the first rhamnosyl residue on p-hydroxybenzoic acid or phenolphthiocerol derivatives to form, after O-methylation at position 2 of the sugar unit, mono-O-methyl-glycosyl-p-hydroxybenzoic acid derivative (p-HBAD I) and 2-O-methyl-rhamnosyl-phenolphthiocerol dimycocerosate (also called mycoside B) during p-hydroxybenzoic acid derivatives (p-HBAD) and glycosylated phenolphthiocerol dimycocerosates (PGL) biosynthesis. The protein is PGL/p-HBAD biosynthesis rhamnosyltransferase of Mycobacterium bovis (strain BCG / Pasteur 1173P2).